The primary structure comprises 548 residues: Membrane protein insertase YidC (548 aa).

The chain crosses the membrane as a helical span at residues 6–26; it reads NLLVIALLFVSFMIWQAWEQD. Residues 28 to 54 form a disordered region; the sequence is NPQPQTQQTTQTTTTAAGSAADQGVPA. A compositionally biased stretch (low complexity) spans 29-42; it reads PQPQTQQTTQTTTT. 4 helical membrane passes run 350–370, 424–444, 458–478, and 499–519; these read FVGN…GIMY, FPLI…MGSI, LSAQ…MFFI, and PVIF…YYIV.

This sequence belongs to the OXA1/ALB3/YidC family. Type 1 subfamily. In terms of assembly, interacts with the Sec translocase complex via SecD. Specifically interacts with transmembrane segments of nascent integral membrane proteins during membrane integration.

The protein resides in the cell inner membrane. In terms of biological role, required for the insertion and/or proper folding and/or complex formation of integral membrane proteins into the membrane. Involved in integration of membrane proteins that insert both dependently and independently of the Sec translocase complex, as well as at least some lipoproteins. Aids folding of multispanning membrane proteins. This Salmonella arizonae (strain ATCC BAA-731 / CDC346-86 / RSK2980) protein is Membrane protein insertase YidC.